The following is a 95-amino-acid chain: UPF0358 protein BA_4159/GBAA_4159/BAS3861 (95 aa).

It belongs to the UPF0358 family.

This chain is UPF0358 protein BA_4159/GBAA_4159/BAS3861, found in Bacillus anthracis.